Consider the following 364-residue polypeptide: Caffeic acid 3-O-methyltransferase 3 (364 aa).

129 to 135 (MNQDKVL) contacts substrate. Positions 161 to 179 (AFEYHGTDPRFNKVFNKGM) are substrate binding. S-adenosyl-L-methionine contacts are provided by Gly-207, Asp-230, Asp-250, Met-251, and Lys-264. His-268 (proton acceptor) is an active-site residue.

It belongs to the class I-like SAM-binding methyltransferase superfamily. Cation-independent O-methyltransferase family. COMT subfamily. Homodimer.

The catalysed reaction is (E)-caffeate + S-adenosyl-L-methionine = (E)-ferulate + S-adenosyl-L-homocysteine + H(+). Its pathway is aromatic compound metabolism; phenylpropanoid biosynthesis. Functionally, catalyzes the conversion of caffeic acid to ferulic acid and of 5-hydroxyferulic acid to sinapic acid. The resulting products may subsequently be converted to the corresponding alcohols that are incorporated into lignins. The protein is Caffeic acid 3-O-methyltransferase 3 (HOMT3) of Populus kitakamiensis (Aspen).